The primary structure comprises 593 residues: Aspartate--tRNA ligase (593 aa).

L-aspartate is bound at residue E173. Positions 197 to 200 are aspartate; that stretch reads QLFK. R219 contributes to the L-aspartate binding site. ATP is bound by residues 219–221 and Q228; that span reads RDE. An L-aspartate-binding site is contributed by H449. Residue E483 coordinates ATP. Position 490 (R490) interacts with L-aspartate. 535–538 provides a ligand contact to ATP; the sequence is GLDR.

The protein belongs to the class-II aminoacyl-tRNA synthetase family. Type 1 subfamily. Homodimer.

It localises to the cytoplasm. The catalysed reaction is tRNA(Asp) + L-aspartate + ATP = L-aspartyl-tRNA(Asp) + AMP + diphosphate. In terms of biological role, catalyzes the attachment of L-aspartate to tRNA(Asp) in a two-step reaction: L-aspartate is first activated by ATP to form Asp-AMP and then transferred to the acceptor end of tRNA(Asp). The polypeptide is Aspartate--tRNA ligase (Shewanella piezotolerans (strain WP3 / JCM 13877)).